We begin with the raw amino-acid sequence, 894 residues long: Myb-like protein K (894 aa).

Residues 93–139 (LQQQQQSPVTNVATNTPPTLQHSISSPSPNNFNNNNNANNQFLSPNS) are compositionally biased toward low complexity. 4 disordered regions span residues 93–221 (LQQQ…SASS), 299–353 (QVGN…QPIT), 492–539 (QQQQ…LEMI), and 601–659 (AATT…HWTS). Residues 140–149 (PQVAKSSPSQ) are compositionally biased toward polar residues. Positions 150-221 (NNPSTPIANT…SQSLNSSASS (72 aa)) are enriched in low complexity. The span at 300–309 (VGNPMQQSND) shows a compositional bias: polar residues. Low complexity-rich tracts occupy residues 310–353 (MQPQ…QPIT) and 492–527 (QQQQ…PQQM). Composition is skewed to basic and acidic residues over residues 611–640 (GKEE…SKKD) and 649–659 (ASKEKTSHWTS). Positions 649-704 (ASKEKTSHWTSEEHNKFLEAVQQFGIKDYHAIAKFVQTRNHHQVRTHVNTYLKNQK) constitute an HTH myb-type domain. The segment at residues 677–700 (YHAIAKFVQTRNHHQVRTHVNTYL) is a DNA-binding region (H-T-H motif). Residues 703–852 (QKKAEAATSS…EYNSGFDSNS (150 aa)) form a disordered region. Composition is skewed to low complexity over residues 710 to 742 (TSST…QPPI), 751 to 805 (QQQQ…QQPQ), and 815 to 845 (PPNN…NEYN).

Its subcellular location is the nucleus. This Dictyostelium discoideum (Social amoeba) protein is Myb-like protein K (mybK).